A 275-amino-acid chain; its full sequence is Ribosomal RNA small subunit methyltransferase A (275 aa).

S-adenosyl-L-methionine is bound by residues Asn-27, Leu-29, Gly-54, Glu-76, Asp-102, and Asn-123.

It belongs to the class I-like SAM-binding methyltransferase superfamily. rRNA adenine N(6)-methyltransferase family. RsmA subfamily.

Its subcellular location is the cytoplasm. It carries out the reaction adenosine(1518)/adenosine(1519) in 16S rRNA + 4 S-adenosyl-L-methionine = N(6)-dimethyladenosine(1518)/N(6)-dimethyladenosine(1519) in 16S rRNA + 4 S-adenosyl-L-homocysteine + 4 H(+). In terms of biological role, specifically dimethylates two adjacent adenosines (A1518 and A1519) in the loop of a conserved hairpin near the 3'-end of 16S rRNA in the 30S particle. May play a critical role in biogenesis of 30S subunits. This chain is Ribosomal RNA small subunit methyltransferase A, found in Chelativorans sp. (strain BNC1).